Consider the following 154-residue polypeptide: Transcriptional repressor NrdR (154 aa).

The segment at 3-34 (CPFCGHSNTQVLDTRMSEDGDAVRRRRRCEAC) is a zinc-finger region. The 91-residue stretch at 49 to 139 (PAIVKKNGSR…VYRSFEDVAE (91 aa)) folds into the ATP-cone domain.

It belongs to the NrdR family. Zn(2+) is required as a cofactor.

Negatively regulates transcription of bacterial ribonucleotide reductase nrd genes and operons by binding to NrdR-boxes. The polypeptide is Transcriptional repressor NrdR (Cupriavidus pinatubonensis (strain JMP 134 / LMG 1197) (Cupriavidus necator (strain JMP 134))).